The chain runs to 95 residues: Co-chaperonin GroES (95 aa).

The protein belongs to the GroES chaperonin family. Heptamer of 7 subunits arranged in a ring. Interacts with the chaperonin GroEL.

The protein resides in the cytoplasm. Together with the chaperonin GroEL, plays an essential role in assisting protein folding. The GroEL-GroES system forms a nano-cage that allows encapsulation of the non-native substrate proteins and provides a physical environment optimized to promote and accelerate protein folding. GroES binds to the apical surface of the GroEL ring, thereby capping the opening of the GroEL channel. The protein is Co-chaperonin GroES of Oleidesulfovibrio alaskensis (strain ATCC BAA-1058 / DSM 17464 / G20) (Desulfovibrio alaskensis).